We begin with the raw amino-acid sequence, 565 residues long: NAD-dependent malic enzyme (565 aa).

Residue tyrosine 104 is the Proton donor of the active site. An NAD(+)-binding site is contributed by arginine 157. Residue lysine 175 is the Proton acceptor of the active site. The a divalent metal cation site is built by glutamate 246, aspartate 247, and aspartate 270. Aspartate 270 and asparagine 418 together coordinate NAD(+).

The protein belongs to the malic enzymes family. In terms of assembly, homotetramer. The cofactor is Mg(2+). Mn(2+) is required as a cofactor.

The catalysed reaction is (S)-malate + NAD(+) = pyruvate + CO2 + NADH. It carries out the reaction oxaloacetate + H(+) = pyruvate + CO2. This chain is NAD-dependent malic enzyme, found in Salmonella choleraesuis (strain SC-B67).